We begin with the raw amino-acid sequence, 379 residues long: MSDFLPFSRPSMGDAELAALREVLASGWITTGPKNQALEAAFCQLTGNRHAIAVSSATGGMHVTLMALGIGPGDEVITPSQTWVSTLNMICLLGATPVMIDVDNDNLMITPDAVEAAITSRTKAIIPVHYAGAPADIDAIRAVGERHGISVIEDAAHAAGTHYKGRHVGWQGTAIFSFHAIKNMTCAEGGLIVTDDDELASRIRSLKFHGLGVDAYDRQTHGRAPQAEVITPGFKYNLADINAALALVQLEKLSHANQRRTEIAQRYLRELADTPFKPLSVPTWDHQHAWHLFIIRVDEAACGISRDALMEKLKAMGIGTGLHFRAAHTQKYYRERFPEVSLPNTEWNSARICSLPLFPDMTDDDVTRVISALRQLSGR.

Lysine 182 is modified (N6-(pyridoxal phosphate)lysine).

Belongs to the DegT/DnrJ/EryC1 family. ArnB subfamily. In terms of assembly, homodimer. It depends on pyridoxal 5'-phosphate as a cofactor.

The catalysed reaction is UDP-4-amino-4-deoxy-beta-L-arabinose + 2-oxoglutarate = UDP-beta-L-threo-pentopyranos-4-ulose + L-glutamate. The protein operates within nucleotide-sugar biosynthesis; UDP-4-deoxy-4-formamido-beta-L-arabinose biosynthesis; UDP-4-deoxy-4-formamido-beta-L-arabinose from UDP-alpha-D-glucuronate: step 2/3. It functions in the pathway bacterial outer membrane biogenesis; lipopolysaccharide biosynthesis. Its function is as follows. Catalyzes the conversion of UDP-4-keto-arabinose (UDP-Ara4O) to UDP-4-amino-4-deoxy-L-arabinose (UDP-L-Ara4N). The modified arabinose is attached to lipid A and is required for resistance to polymyxin and cationic antimicrobial peptides. This is UDP-4-amino-4-deoxy-L-arabinose--oxoglutarate aminotransferase from Klebsiella pneumoniae subsp. pneumoniae (strain ATCC 700721 / MGH 78578).